The sequence spans 874 residues: Alanine--tRNA ligase (874 aa).

Residues H562, H566, C665, and H669 each coordinate Zn(2+).

It belongs to the class-II aminoacyl-tRNA synthetase family. The cofactor is Zn(2+).

It localises to the cytoplasm. It carries out the reaction tRNA(Ala) + L-alanine + ATP = L-alanyl-tRNA(Ala) + AMP + diphosphate. Catalyzes the attachment of alanine to tRNA(Ala) in a two-step reaction: alanine is first activated by ATP to form Ala-AMP and then transferred to the acceptor end of tRNA(Ala). Also edits incorrectly charged Ser-tRNA(Ala) and Gly-tRNA(Ala) via its editing domain. The protein is Alanine--tRNA ligase of Pseudomonas fluorescens (strain ATCC BAA-477 / NRRL B-23932 / Pf-5).